Here is a 330-residue protein sequence, read N- to C-terminus: Beta-hexosaminidase (330 aa).

Residues D62, R70, R130, and 160–161 (KH) each bind substrate. The active-site Proton donor/acceptor is H173. D242 serves as the catalytic Nucleophile.

The protein belongs to the glycosyl hydrolase 3 family. NagZ subfamily. Monomer.

The protein localises to the cytoplasm. It catalyses the reaction Hydrolysis of terminal non-reducing N-acetyl-D-hexosamine residues in N-acetyl-beta-D-hexosaminides.. Its pathway is cell wall biogenesis; peptidoglycan recycling. Plays a role in peptidoglycan recycling by cleaving the terminal beta-1,4-linked N-acetylglucosamine (GlcNAc) from peptide-linked peptidoglycan fragments, giving rise to free GlcNAc, anhydro-N-acetylmuramic acid and anhydro-N-acetylmuramic acid-linked peptides. Plays a role in beta-lactam antibiotic resistance via its role in generating anhydro-N-acetylmuramic acid-linked peptides; these peptides function as signaling molecules that induce high-level expression of the beta-lactamase AmpC. This Vibrio cholerae serotype O1 (strain ATCC 39315 / El Tor Inaba N16961) protein is Beta-hexosaminidase.